The primary structure comprises 262 residues: Aconitate isomerase (262 aa).

Residues 1-22 (MFPRLPTLALGALLLASTPLLA) form the signal peptide.

Monomer.

The enzyme catalyses trans-aconitate = cis-aconitate. Activated more than 1.5 fold by Ca(2+), Mg(2+), Mn(2+), Ni(2+), Fe(2+), DDT and 1,10-phenanthroline. Strongly inhibited by Ag(+) and Hg(+). Inhibited by addition of 20% (v/v) glycerol. No effect by addition of NADH or NADPH. Functionally, involved in assimilation of trans-aconitic acid. Preference for cis-aconitic acid is 14-fold higher than for trans-aconitic acid. Not active on intermediates of tricarboxylic acid (TCA) cycle including citric acid, succinic acid, fumaric acid, and 2-oxoglutaric acid or on other dicarboxilic acids including itaconic acid, formic acid, citraconic acid or maleic acid. The chain is Aconitate isomerase from Pseudomonas sp.